The chain runs to 556 residues: MKTDIEIAQSIELKPIVDVVEKLGISYDDLELYGKYKAKLSFDKIRAVESNPVGKLILVTAINPTPAGEGKSTLTIGLADALNKIGKKTMIAIREPSLGPVMGIKGGAAGGGYAQVLPMEDINLHFTGDMHAITTANNALSALIDNHLHQGNELGIDQRRILWKRVVDLNDRALRHVTVGLGGPLNGIPREDGFDITVASEIMAILCLATDIEDLKRRLANIVIGYRYDRTPVSVGDLQVEGALALILKDAIKPNLVQTIYGTPAFVHGGPFANIAHGCNSVLATTTALHLADYTVTEAGFGADLGAEKFLDIKTPNLPTSPDAVVIVATLRALKMNGGVAKDALTEENVEAVRAGFANLKRHVENIRKFGIPAVVAINEFVSDTEAEIAALKELCASIDVPVELASVWADGAEGGVALAETVVKTIAENPANYKRLYDNDLSVQEKIEKIVTEIYRGSKVNFEKKAQTQIAQIVQNGWDKLPICMAKTQYSFSDNPNALGAPENFEITIRELVPKLGAGFIVALTGDVMTMPGLPKRPAALNMDVESDGTVLGLF.

65–72 contributes to the ATP binding site; that stretch reads TPAGEGKS.

The protein belongs to the formate--tetrahydrofolate ligase family.

The enzyme catalyses (6S)-5,6,7,8-tetrahydrofolate + formate + ATP = (6R)-10-formyltetrahydrofolate + ADP + phosphate. It participates in one-carbon metabolism; tetrahydrofolate interconversion. In Streptococcus pneumoniae (strain Taiwan19F-14), this protein is Formate--tetrahydrofolate ligase.